Consider the following 206-residue polypeptide: Ribonuclease HII (206 aa).

Residues 18 to 206 (GRVAGVDEVG…PVREWLEANS (189 aa)) form the RNase H type-2 domain. Asp-24, Glu-25, and Asp-116 together coordinate a divalent metal cation.

It belongs to the RNase HII family. Mn(2+) is required as a cofactor. Mg(2+) serves as cofactor.

Its subcellular location is the cytoplasm. The enzyme catalyses Endonucleolytic cleavage to 5'-phosphomonoester.. In terms of biological role, endonuclease that specifically degrades the RNA of RNA-DNA hybrids. This chain is Ribonuclease HII, found in Shewanella amazonensis (strain ATCC BAA-1098 / SB2B).